The following is a 166-amino-acid chain: UPF0251 protein UNCMA_27150 (166 aa).

Belongs to the UPF0251 family.

The sequence is that of UPF0251 protein UNCMA_27150 from Methanocella arvoryzae (strain DSM 22066 / NBRC 105507 / MRE50).